We begin with the raw amino-acid sequence, 493 residues long: Desmethylyatein synthase (493 aa).

The helical transmembrane segment at 1-21 (METFQCLTLFLLFISTVFILK) threads the bilayer. Heme is bound at residue C434.

Belongs to the cytochrome P450 family. Heme is required as a cofactor.

It localises to the membrane. It catalyses the reaction (-)-bursehernin + reduced [NADPH--hemoprotein reductase] + O2 = (-)-5'-demethylyatein + oxidized [NADPH--hemoprotein reductase] + H2O + H(+). It participates in aromatic compound metabolism; phenylpropanoid biosynthesis. Functionally, cytochrome P450 involved in the biosynthesis of etoposide, a chemotherapeutic compound of the topoisomerase inhibitor family. Catalyzes the conversion of bursehernin to demethylyatein. This chain is Desmethylyatein synthase, found in Sinopodophyllum hexandrum (Himalayan may apple).